Here is a 552-residue protein sequence, read N- to C-terminus: Chaperonin GroEL (552 aa).

Residues 30–33 (TLGP), K51, 87–91 (DGTTT), G415, and D496 each bind ATP.

Belongs to the chaperonin (HSP60) family. In terms of assembly, forms a cylinder of 14 subunits composed of two heptameric rings stacked back-to-back. Interacts with the co-chaperonin GroES.

The protein resides in the cytoplasm. The enzyme catalyses ATP + H2O + a folded polypeptide = ADP + phosphate + an unfolded polypeptide.. In terms of biological role, together with its co-chaperonin GroES, plays an essential role in assisting protein folding. The GroEL-GroES system forms a nano-cage that allows encapsulation of the non-native substrate proteins and provides a physical environment optimized to promote and accelerate protein folding. This is Chaperonin GroEL from Paramagnetospirillum magneticum (strain ATCC 700264 / AMB-1) (Magnetospirillum magneticum).